The sequence spans 270 residues: Bifunctional folate synthesis protein (270 aa).

The segment at 1–119 is DHNA; that stretch reads MDQLQIKDLE…TCSVTIHRRK (119 aa). Substrate is bound by residues E21, Y53, and 72–73; that span reads IE. The active-site Proton donor/acceptor; for DHNA activity is the K99. The HPPK stretch occupies residues 120 to 270; that stretch reads QRAFIALGSN…IRNLYDALKK (151 aa). Residues 160–163, 171–173, 192–195, 200–215, 227–233, and 238–240 each bind ATP; these read TEPW, FAN, LAIE, RVRE…DLDL, DLILPHP, and RLF. Residues D212 and D214 each coordinate Mg(2+).

In the N-terminal section; belongs to the DHNA family. It in the C-terminal section; belongs to the HPPK family. As to quaternary structure, homotrimer or homotetramer.

The enzyme catalyses 7,8-dihydroneopterin = 6-hydroxymethyl-7,8-dihydropterin + glycolaldehyde. It carries out the reaction 6-hydroxymethyl-7,8-dihydropterin + ATP = (7,8-dihydropterin-6-yl)methyl diphosphate + AMP + H(+). It functions in the pathway cofactor biosynthesis; tetrahydrofolate biosynthesis; 2-amino-4-hydroxy-6-hydroxymethyl-7,8-dihydropteridine diphosphate from 7,8-dihydroneopterin triphosphate: step 3/4. The protein operates within cofactor biosynthesis; tetrahydrofolate biosynthesis; 2-amino-4-hydroxy-6-hydroxymethyl-7,8-dihydropteridine diphosphate from 7,8-dihydroneopterin triphosphate: step 4/4. Functionally, catalyzes two sequential steps of tetrahydrofolate biosynthesis, the conversion of 7,8-dihydroneopterin to 6-hydroxymethyl-7,8-dihydropterin diphosphate. This Streptococcus pneumoniae serotype 4 (strain ATCC BAA-334 / TIGR4) protein is Bifunctional folate synthesis protein.